The following is a 754-amino-acid chain: MAIPFKVLIIGGGVAGLTLAIMLEAYGFDYELLEKHSDVAPKLGAGVGLTPNGARILDQIGVWEMMCERSSPVDSGTALSPEGRTVIFNPNMGEWLQKLFGYKIHFLSRHDCLKILFNKIQQKSRVHLLKEVIKIEAGNLGEKGYVETKDGSIYTGDIIIGADGVRSSVRRELWRIADSESPGYIPKQDKTGIVSFYTAVVGIAYNSGLPEGGSARAYNHHRSYFFQEGREGSGEFYWWLCAKNEKTKEGVIPKLSSEVKEGLLNKYKNDQIGPDLTLGALYKSSIYSTVIPLQEFVLQKCFYKNILLIGDTFRKLHPVAGQGANSAIEESAFVADMLWDLRERGALHDPDSIQKALTEFQTERVVRTTALREDANLVQRMESLDNPVMKFMALKFIPRLNFVIAFLPQLGSSFTPARHLKHLRPPKVGLCPFSQDMKAKPLPRSPLATFSWVTVLILAASSPWLASKYFISGARSFTDDQASQLAEVLELYISILSVSISGMWVIESYKTSSLISPFTSSLPWILASNFWGWQKILPIYICFYILSSQSVVYYYMPQTMTDLGVAKALLPALLVVYTVSAVCTINESGGNTDNSWWFTADFAFPVVAYLSGMFLNATSTMPQAVDVVFSTIDIPYQRRFQNTIAFVGFVAYAALASQYGTTILNEGLNLLNIPAVKNLASLTTVTTLWCLYSAWELRRINATGTSVIRAWLTILSSTIFGGPAATLAGTFIWSKVELAKATSFHPTMQSTDTL.

Residues isoleucine 3–leucine 23 traverse the membrane as a helical segment. Glutamate 34, glycine 48, and arginine 109 together coordinate FAD. Tyrosine 218 is an active-site residue. FAD-binding residues include aspartate 311 and alanine 324. 4 helical membrane-spanning segments follow: residues proline 446–alanine 466, alanine 486–isoleucine 506, isoleucine 536–methionine 556, and leucine 563–cysteine 583. The N-linked (GlcNAc...) asparagine glycan is linked to asparagine 586. The chain crosses the membrane as a helical span at residues serine 595 to leucine 615. N-linked (GlcNAc...) asparagine glycosylation is present at asparagine 616. Transmembrane regions (helical) follow at residues isoleucine 644–leucine 664 and leucine 679–leucine 697. An N-linked (GlcNAc...) asparagine glycan is attached at asparagine 701. Residues leucine 712 to isoleucine 732 traverse the membrane as a helical segment.

It belongs to the paxM FAD-dependent monooxygenase family. FAD serves as cofactor.

Its subcellular location is the membrane. It functions in the pathway secondary metabolite biosynthesis; terpenoid biosynthesis. FAD-dependent monooxygenase; part of the gene cluster that mediates the biosynthesis of the meroterpenoids nectripenoids A and B, as well as cochliquninone D and isocochliquninone E. The pathway probably begins with the HR-PKS ntnH that catalyzes two chain-extension steps to form a reduced triketide, which then primes the SAT domain in the NR-PKS ntnG to initiate three more cycles of extension to give a linear hexaketide corresponding to the polyketide part of nectripenoids. The FAD-dependent monooxygenase ntnJ then performs an oxidative decarboxylation at C11 of the ntnH/ntnG product, via an electrophilic aromatic hydroxylation with concomitant ipso-decarboxylation. The membrane-bound polyprenyl transferase ntnF then introduces a farnesyl group before the FAD-dependent monooxygenase ntnK functions as the first epoxidase on terminal C12'-C13' olefin, followed by a second epoxidation on C7'-C8' catalyzed by ntnA. The terpene cyclase/mutase ntnI then initiates the sequential tricyclic ring formation through protonation of the terminal epoxide and catalyzes the regioselective and stereoselective 6/6/6-tricyclic ring formation. The cytochrome P450 monooxygenase ntnM may then hydroxylate C1'. This chain is FAD-dependent monooxygenase ntnA, found in Nectria sp.